We begin with the raw amino-acid sequence, 515 residues long: U3 small nucleolar RNA-associated protein 15 homolog (515 aa).

WD repeat units follow at residues 36–75 (KEFG…PIKT), 78–117 (RFKD…ALRQ), 120–159 (GHSK…EITS), 162–202 (EHTD…SVMS), 204–242 (DHGQ…QLLV), 246–285 (NHHK…VVHS), and 287–326 (DYAA…RKQL).

In terms of assembly, part of the small subunit (SSU) processome, composed of more than 70 proteins and the RNA chaperone small nucleolar RNA (snoRNA) U3. May be a component of the proposed t-UTP subcomplex of the ribosomal small subunit (SSU) processome.

Its subcellular location is the nucleus. The protein localises to the nucleolus. Its function is as follows. Ribosome biogenesis factor. Involved in nucleolar processing of pre-18S ribosomal RNA. Required for optimal pre-ribosomal RNA transcription by RNA polymerase I. Part of the small subunit (SSU) processome, first precursor of the small eukaryotic ribosomal subunit. During the assembly of the SSU processome in the nucleolus, many ribosome biogenesis factors, an RNA chaperone and ribosomal proteins associate with the nascent pre-rRNA and work in concert to generate RNA folding, modifications, rearrangements and cleavage as well as targeted degradation of pre-ribosomal RNA by the RNA exosome. The chain is U3 small nucleolar RNA-associated protein 15 homolog (utp15) from Xenopus tropicalis (Western clawed frog).